The primary structure comprises 252 residues: MHAEFRTDRGRIRHHNEDNGGVFENKDKQPIVIVADGMGGHRAGDVASEMAVRLLSDAWKETTALLTAEEIETWLQKTIQEVNKEIVLYAESEMDLNGMGTTLVAAIMAQSQVVIANVGDSRGYLLQNDVMRQLTEDHSLVHELLRTGEISKEDAMNHPRKNILLRALGVEGKVEVDTFVVPFQTSDTLLLCSDGLTNMVPEAEMEEILKSKRTLSEKADVFITKANSYGGEDNITVLLVERNLMQKGRDAS.

A disordered region spans residues 1-22; the sequence is MHAEFRTDRGRIRHHNEDNGGV. Residues 2–242 enclose the PPM-type phosphatase domain; sequence HAEFRTDRGR…DNITVLLVER (241 aa). Mn(2+) contacts are provided by Asp36, Gly37, Asp194, and Asp233.

It belongs to the PP2C family. Mn(2+) is required as a cofactor.

The protein localises to the cytoplasm. Its subcellular location is the membrane. It carries out the reaction O-phospho-L-seryl-[protein] + H2O = L-seryl-[protein] + phosphate. The catalysed reaction is O-phospho-L-threonyl-[protein] + H2O = L-threonyl-[protein] + phosphate. Its function is as follows. Protein phosphatase that dephosphorylates EF-Tu. The chain is Serine/threonine phosphatase stp (stp) from Listeria innocua serovar 6a (strain ATCC BAA-680 / CLIP 11262).